We begin with the raw amino-acid sequence, 121 residues long: Small ribosomal subunit protein uS13 (121 aa).

Residues 94–121 (DLPVRGQRTKTNARTRKGPRKSGVQLKK) form a disordered region. The span at 100–121 (QRTKTNARTRKGPRKSGVQLKK) shows a compositional bias: basic residues.

Belongs to the universal ribosomal protein uS13 family. In terms of assembly, part of the 30S ribosomal subunit. Forms a loose heterodimer with protein S19. Forms two bridges to the 50S subunit in the 70S ribosome.

Its function is as follows. Located at the top of the head of the 30S subunit, it contacts several helices of the 16S rRNA. In the 70S ribosome it contacts the 23S rRNA (bridge B1a) and protein L5 of the 50S subunit (bridge B1b), connecting the 2 subunits; these bridges are implicated in subunit movement. Contacts the tRNAs in the A and P-sites. The sequence is that of Small ribosomal subunit protein uS13 from Polynucleobacter necessarius subsp. necessarius (strain STIR1).